A 372-amino-acid chain; its full sequence is UDP-N-acetylglucosamine--N-acetylmuramyl-(pentapeptide) pyrophosphoryl-undecaprenol N-acetylglucosamine transferase (372 aa).

Residues 15-17 (TGG), asparagine 126, arginine 169, serine 197, and glutamine 299 contribute to the UDP-N-acetyl-alpha-D-glucosamine site.

Belongs to the glycosyltransferase 28 family. MurG subfamily.

It is found in the cell inner membrane. The catalysed reaction is di-trans,octa-cis-undecaprenyl diphospho-N-acetyl-alpha-D-muramoyl-L-alanyl-D-glutamyl-meso-2,6-diaminopimeloyl-D-alanyl-D-alanine + UDP-N-acetyl-alpha-D-glucosamine = di-trans,octa-cis-undecaprenyl diphospho-[N-acetyl-alpha-D-glucosaminyl-(1-&gt;4)]-N-acetyl-alpha-D-muramoyl-L-alanyl-D-glutamyl-meso-2,6-diaminopimeloyl-D-alanyl-D-alanine + UDP + H(+). It participates in cell wall biogenesis; peptidoglycan biosynthesis. Cell wall formation. Catalyzes the transfer of a GlcNAc subunit on undecaprenyl-pyrophosphoryl-MurNAc-pentapeptide (lipid intermediate I) to form undecaprenyl-pyrophosphoryl-MurNAc-(pentapeptide)GlcNAc (lipid intermediate II). The sequence is that of UDP-N-acetylglucosamine--N-acetylmuramyl-(pentapeptide) pyrophosphoryl-undecaprenol N-acetylglucosamine transferase from Methylobacterium sp. (strain 4-46).